A 315-amino-acid chain; its full sequence is uncharacterized protein (315 aa).

A run of 3 helical transmembrane segments spans residues 18 to 38, 202 to 222, and 244 to 264; these read IWFIIFYLFVIQALGSAIISG, ILAIAMFIVIWPVTMGILAGI, and LIYAVVIAFVCTPVAIIVIVL. The interval 288-315 is disordered; sequence VCSTGNRSSGSTDQDISTTKQQSQEAVA.

The protein resides in the membrane. This is an uncharacterized protein from Saccharomyces cerevisiae (strain ATCC 204508 / S288c) (Baker's yeast).